The primary structure comprises 226 residues: ATP-dependent dethiobiotin synthetase BioD (226 aa).

Residue Thr19 participates in Mg(2+) binding. Residue Lys40 is part of the active site. Asp53 and Glu114 together coordinate Mg(2+). Residues Asp53, 114-117, and 174-175 each bind ATP; these read EGAG and NR.

This sequence belongs to the dethiobiotin synthetase family. Homodimer. The cofactor is Mg(2+).

The protein resides in the cytoplasm. It catalyses the reaction (7R,8S)-7,8-diammoniononanoate + CO2 + ATP = (4R,5S)-dethiobiotin + ADP + phosphate + 3 H(+). It participates in cofactor biosynthesis; biotin biosynthesis; biotin from 7,8-diaminononanoate: step 1/2. Catalyzes a mechanistically unusual reaction, the ATP-dependent insertion of CO2 between the N7 and N8 nitrogen atoms of 7,8-diaminopelargonic acid (DAPA, also called 7,8-diammoniononanoate) to form a ureido ring. This chain is ATP-dependent dethiobiotin synthetase BioD, found in Nitrosospira multiformis (strain ATCC 25196 / NCIMB 11849 / C 71).